Consider the following 95-residue polypeptide: Putative pterin-4-alpha-carbinolamine dehydratase (95 aa).

The protein belongs to the pterin-4-alpha-carbinolamine dehydratase family.

It carries out the reaction (4aS,6R)-4a-hydroxy-L-erythro-5,6,7,8-tetrahydrobiopterin = (6R)-L-erythro-6,7-dihydrobiopterin + H2O. In Prochlorococcus marinus (strain NATL2A), this protein is Putative pterin-4-alpha-carbinolamine dehydratase.